Reading from the N-terminus, the 429-residue chain is Tol-Pal system protein TolB (429 aa).

Residues 1–22 (MTRRLFILITIMLCLIPALLHS) form the signal peptide. 2 disordered regions span residues 362 to 383 (PDGTNDTRLTSEGSNEHPRWSP) and 407 to 429 (GSGQTRVSGGKGRDSHPTWSPRW). Residues 363–374 (DGTNDTRLTSEG) show a composition bias toward polar residues.

The protein belongs to the TolB family. In terms of assembly, the Tol-Pal system is composed of five core proteins: the inner membrane proteins TolA, TolQ and TolR, the periplasmic protein TolB and the outer membrane protein Pal. They form a network linking the inner and outer membranes and the peptidoglycan layer.

It localises to the periplasm. Functionally, part of the Tol-Pal system, which plays a role in outer membrane invagination during cell division and is important for maintaining outer membrane integrity. This chain is Tol-Pal system protein TolB, found in Geobacter metallireducens (strain ATCC 53774 / DSM 7210 / GS-15).